The chain runs to 286 residues: 4-diphosphocytidyl-2-C-methyl-D-erythritol kinase (286 aa).

Lys11 is a catalytic residue. 93 to 103 (PFGAGLGGGSS) contributes to the ATP binding site. Asp135 is an active-site residue.

The protein belongs to the GHMP kinase family. IspE subfamily.

It carries out the reaction 4-CDP-2-C-methyl-D-erythritol + ATP = 4-CDP-2-C-methyl-D-erythritol 2-phosphate + ADP + H(+). It participates in isoprenoid biosynthesis; isopentenyl diphosphate biosynthesis via DXP pathway; isopentenyl diphosphate from 1-deoxy-D-xylulose 5-phosphate: step 3/6. Functionally, catalyzes the phosphorylation of the position 2 hydroxy group of 4-diphosphocytidyl-2C-methyl-D-erythritol. The chain is 4-diphosphocytidyl-2-C-methyl-D-erythritol kinase from Chlorobaculum parvum (strain DSM 263 / NCIMB 8327) (Chlorobium vibrioforme subsp. thiosulfatophilum).